The sequence spans 345 residues: MSKQSLSYKDAGVDINAGNALVEKIKADVKRTTRPEVIGGLGGFGALCAIPTKYKEPILVSGTDGVGTKLRLAIDLNRHDSIGIDLVAMCVNDLVVQGAEPLFFLDYYATGKLDVDVAASVIKGIANGCEQSGCALVGGETAEMPGMYHAGDYDLAGFCVGVVEKSDIIDGSKVRVGDVLIALGSSGPHSNGYSLIRKVIEVAGINPAEEQLAGKPLADQVLAPTKIYVKSILQLIKHADVHAICHLTGGGFWENIPRVLPKNVKAVIDESSWEWQPVFKWLQEKGNIDTHEMYRTFNCGVGMIIALPQEDVDTALGLLKQTGEKAWVIGQIEHATDGEEQVIIR.

It belongs to the AIR synthase family.

It localises to the cytoplasm. It carries out the reaction 2-formamido-N(1)-(5-O-phospho-beta-D-ribosyl)acetamidine + ATP = 5-amino-1-(5-phospho-beta-D-ribosyl)imidazole + ADP + phosphate + H(+). Its pathway is purine metabolism; IMP biosynthesis via de novo pathway; 5-amino-1-(5-phospho-D-ribosyl)imidazole from N(2)-formyl-N(1)-(5-phospho-D-ribosyl)glycinamide: step 2/2. The protein is Phosphoribosylformylglycinamidine cyclo-ligase of Pasteurella multocida (strain Pm70).